Here is an 89-residue protein sequence, read N- to C-terminus: Elongation factor 1-beta (89 aa).

Belongs to the EF-1-beta/EF-1-delta family.

Promotes the exchange of GDP for GTP in EF-1-alpha/GDP, thus allowing the regeneration of EF-1-alpha/GTP that could then be used to form the ternary complex EF-1-alpha/GTP/AAtRNA. The sequence is that of Elongation factor 1-beta from Methanococcus maripaludis (strain C5 / ATCC BAA-1333).